Here is a 448-residue protein sequence, read N- to C-terminus: Exodeoxyribonuclease 7 large subunit (448 aa).

Belongs to the XseA family. Heterooligomer composed of large and small subunits.

The protein localises to the cytoplasm. It carries out the reaction Exonucleolytic cleavage in either 5'- to 3'- or 3'- to 5'-direction to yield nucleoside 5'-phosphates.. Bidirectionally degrades single-stranded DNA into large acid-insoluble oligonucleotides, which are then degraded further into small acid-soluble oligonucleotides. This is Exodeoxyribonuclease 7 large subunit from Shewanella sp. (strain MR-4).